A 278-amino-acid polypeptide reads, in one-letter code: Sulfur carrier protein FdhD (278 aa).

The Cysteine persulfide intermediate role is filled by Cys-121. 260-265 (FCKPGR) is a binding site for Mo-bis(molybdopterin guanine dinucleotide).

It belongs to the FdhD family.

The protein localises to the cytoplasm. Functionally, required for formate dehydrogenase (FDH) activity. Acts as a sulfur carrier protein that transfers sulfur from IscS to the molybdenum cofactor prior to its insertion into FDH. The polypeptide is Sulfur carrier protein FdhD (Salmonella schwarzengrund (strain CVM19633)).